The following is a 453-amino-acid chain: Ribosomal protein uS12 methylthiotransferase RimO (453 aa).

In terms of domain architecture, MTTase N-terminal spans proline 5 to proline 120. Residues cysteine 14, cysteine 50, cysteine 79, cysteine 151, cysteine 155, and cysteine 158 each contribute to the [4Fe-4S] cluster site. Residues leucine 137–arginine 382 enclose the Radical SAM core domain. In terms of domain architecture, TRAM spans alanine 385–valine 453.

This sequence belongs to the methylthiotransferase family. RimO subfamily. The cofactor is [4Fe-4S] cluster.

The protein localises to the cytoplasm. It carries out the reaction L-aspartate(89)-[ribosomal protein uS12]-hydrogen + (sulfur carrier)-SH + AH2 + 2 S-adenosyl-L-methionine = 3-methylsulfanyl-L-aspartate(89)-[ribosomal protein uS12]-hydrogen + (sulfur carrier)-H + 5'-deoxyadenosine + L-methionine + A + S-adenosyl-L-homocysteine + 2 H(+). Its function is as follows. Catalyzes the methylthiolation of an aspartic acid residue of ribosomal protein uS12. The protein is Ribosomal protein uS12 methylthiotransferase RimO of Burkholderia multivorans (strain ATCC 17616 / 249).